Here is a 60-residue protein sequence, read N- to C-terminus: Large ribosomal subunit protein bL32 (60 aa).

The disordered stretch occupies residues 1 to 60 (MAVQQNKKSPSKRGMHRSHNALTVPGIAVEPTTGETHMRHHISPNGFYRGRQVLKNKSEA). A compositionally biased stretch (basic residues) spans 9-19 (SPSKRGMHRSH).

It belongs to the bacterial ribosomal protein bL32 family.

The protein is Large ribosomal subunit protein bL32 of Acidovorax ebreus (strain TPSY) (Diaphorobacter sp. (strain TPSY)).